A 128-amino-acid polypeptide reads, in one-letter code: MYCQDSNICAVFAVQGGKVGRKHGIKRGRRPSIRSPAQRARGPWIHESKHPAFAKQQINLEMPNSRATTELAWVCSSTSRKKKWARSLTLSTAPLSPPPSLVHCEDCSCLPGCHSGDLYNLAPAERTC.

A compositionally biased stretch (basic residues) spans K22 to S32. The segment at K22–G42 is disordered.

The sequence is that of Putative protein SEM1, isoform 2 from Homo sapiens (Human).